The primary structure comprises 252 residues: E3 ubiquitin-protein ligase MARCHF3 (252 aa).

The RING-CH-type zinc-finger motif lies at 62 to 122; the sequence is SSFNDHPMCR…ELCHFRFSVE (61 aa). Zn(2+) is bound by residues C70, C73, C86, C88, H96, C99, C112, and C115. Helical transmembrane passes span 144 to 164 and 181 to 201; these read LFGDMVCFLFITPLATISGWL and AVGLIALTVALFTIYLFWTLV.

It is found in the cytoplasmic vesicle membrane. The protein resides in the early endosome membrane. The catalysed reaction is S-ubiquitinyl-[E2 ubiquitin-conjugating enzyme]-L-cysteine + [acceptor protein]-L-lysine = [E2 ubiquitin-conjugating enzyme]-L-cysteine + N(6)-ubiquitinyl-[acceptor protein]-L-lysine.. It functions in the pathway protein modification; protein ubiquitination. Functionally, E3 ubiquitin-protein ligase which may be involved in endosomal trafficking. E3 ubiquitin ligases accept ubiquitin from an E2 ubiquitin-conjugating enzyme in the form of a thioester and then directly transfer the ubiquitin to targeted substrates. The polypeptide is E3 ubiquitin-protein ligase MARCHF3 (marchf3) (Xenopus laevis (African clawed frog)).